The chain runs to 125 residues: Mesotocin-neurophysin MT (125 aa).

An N-terminal signal peptide occupies residues 1–19 (MSYTALAVTFFGWLALSSA). The cysteines at positions 20 and 25 are disulfide-linked. The residue at position 28 (glycine 28) is a Glycine amide. Disulfide bonds link cysteine 42–cysteine 86, cysteine 45–cysteine 59, cysteine 53–cysteine 76, cysteine 60–cysteine 66, cysteine 93–cysteine 106, cysteine 100–cysteine 118, and cysteine 107–cysteine 112.

It belongs to the vasopressin/oxytocin family. Mesotocin is produced by magnocellular preoptic neurons in the hypothalamus in amphibians, reptiles and birds.

Its subcellular location is the secreted. In terms of biological role, mesotocin is a diuretic hormone. This is Mesotocin-neurophysin MT from Bufo japonicus (Japanese common toad).